The sequence spans 188 residues: UPF0301 protein azo3459 (188 aa).

This sequence belongs to the UPF0301 (AlgH) family.

The protein is UPF0301 protein azo3459 of Azoarcus sp. (strain BH72).